The following is a 1053-amino-acid chain: Ubiquitin-like modifier-activating enzyme 6 (1053 aa).

An N-acetylmethionine modification is found at M1. R46 contacts ATP. Phosphothreonine is present on T54. The ATP site is built by A470 and D497. The Mg(2+) site is built by D499 and E502. 4 residues coordinate ATP: N505, R508, Q509, and K521. Residue K544 is modified to N6-acetyllysine. V545 lines the ATP pocket. D569 contributes to the Mg(2+) binding site. N570 is an ATP binding site. Catalysis depends on C625, which acts as the Glycyl thioester intermediate. At K729 the chain carries N6-acetyllysine. A Phosphoserine modification is found at S737.

The protein belongs to the ubiquitin-activating E1 family. In terms of assembly, forms a thioester with UBD in cells stimulated with tumor necrosis factor-alpha (TNFa) and interferon-gamma (IFNg).

The catalysed reaction is ATP + ubiquitin + [E1 ubiquitin-activating enzyme]-L-cysteine = AMP + diphosphate + S-ubiquitinyl-[E1 ubiquitin-activating enzyme]-L-cysteine.. It participates in protein modification; protein ubiquitination. In terms of biological role, activates ubiquitin by first adenylating its C-terminal glycine residue with ATP, and thereafter linking this residue to the side chain of a cysteine residue in E1, yielding a ubiquitin-E1 thioester and free AMP. Specific for ubiquitin, does not activate ubiquitin-like peptides. Also activates UBD/FAT10 conjugation via adenylation of its C-terminal glycine. Differs from UBE1 in its specificity for substrate E2 charging. Does not charge cell cycle E2s, such as CDC34. Essential for embryonic development. This chain is Ubiquitin-like modifier-activating enzyme 6 (Uba6), found in Mus musculus (Mouse).